Reading from the N-terminus, the 415-residue chain is ORC1-type DNA replication protein 2 (415 aa).

ATP is bound by residues 69–73, Tyr215, and Arg227; that span reads TGKSV.

This sequence belongs to the CDC6/cdc18 family.

Its function is as follows. Involved in regulation of DNA replication. The polypeptide is ORC1-type DNA replication protein 2 (cdc6-2) (Sulfolobus acidocaldarius (strain ATCC 33909 / DSM 639 / JCM 8929 / NBRC 15157 / NCIMB 11770)).